The following is a 386-amino-acid chain: Patatin-T5 (386 aa).

The N-terminal stretch at 1-23 (MATTNSFTILIFMILATTSSTFA) is a signal peptide. The 198-residue stretch at 32 to 229 (LSIDGGGIKG…TVDDPALLSI (198 aa)) folds into the PNPLA domain. Positions 36 to 41 (GGGIKG) match the GXGXXG motif. An N-linked (GlcNAc...) asparagine glycan is attached at asparagine 60. The GXSXG signature appears at 75 to 79 (GTSTG). Residue serine 77 is the Nucleophile of the active site. Residues asparagine 90 and asparagine 202 are each glycosylated (N-linked (GlcNAc...) asparagine). The active-site Proton acceptor is aspartate 215. The short motif at 215-217 (DGA) is the DGA/G element.

The protein belongs to the patatin family. Post-translationally, N-glycosylated. As to expression, tuber and stolon.

It localises to the vacuole. Its function is as follows. Probable lipolytic acyl hydrolase (LAH), an activity which is thought to be involved in the response of tubers to pathogens. The sequence is that of Patatin-T5 from Solanum tuberosum (Potato).